We begin with the raw amino-acid sequence, 705 residues long: 3-hydroxypropionate--CoA ligase [ADP-forming] (705 aa).

The 37-residue stretch at K25–K61 folds into the ATP-grasp domain. A51–K61 is a binding site for ATP.

It in the N-terminal section; belongs to the acetate CoA ligase beta subunit family. In the C-terminal section; belongs to the acetate CoA ligase alpha subunit family. The cofactor is Mg(2+). Mn(2+) is required as a cofactor.

It catalyses the reaction 3-hydroxypropanoate + ATP + CoA = 3-hydroxypropanoyl-CoA + ADP + phosphate. Functionally, involved in thaumarchaeal hydroxypropionate/hydroxybutyrate (HP/HB) cycle, a modified version of the autotrophic HP/HB cycle of Crenarchaeota. Catalyzes the formation of 3-hydroxypropionyl-CoA, ADP and phosphate from 3-hydroxypropionate, coenzyme A (CoA) and ATP. Can also use 4-hydroxybutyrate, propionate and butyrate, with poor catalytic efficiency. This Nitrosopumilus maritimus (strain SCM1) protein is 3-hydroxypropionate--CoA ligase [ADP-forming].